Consider the following 119-residue polypeptide: Large ribosomal subunit protein bL20 (119 aa).

This sequence belongs to the bacterial ribosomal protein bL20 family.

Its function is as follows. Binds directly to 23S ribosomal RNA and is necessary for the in vitro assembly process of the 50S ribosomal subunit. It is not involved in the protein synthesizing functions of that subunit. This is Large ribosomal subunit protein bL20 from Rhodospirillum centenum (strain ATCC 51521 / SW).